A 634-amino-acid chain; its full sequence is Probable sulfate transporter 3.5 (634 aa).

Polar residues predominate over residues 1 to 12 (MENTITSSTSSP). Residues 1–25 (MENTITSSTSSPKGRGVNFSTPRGF) are disordered. At 1 to 81 (MENTITSSTS…KYDMQKLKYD (81 aa)) the chain is on the cytoplasmic side. A helical membrane pass occupies residues 82–102 (VLAGITITSLAVPQGISYAKL). Residues 103-104 (AS) lie on the Extracellular side of the membrane. Residues 105-125 (IPPIIGLYSSFVPPFVYAVFG) form a helical membrane-spanning segment. Over 126 to 130 (SSNNL) the chain is Cytoplasmic. A helical membrane pass occupies residues 131–151 (AVGTVAACSLLIAETFGEEMI). Residues 152-158 (KNEPELY) lie on the Extracellular side of the membrane. Residues 159–179 (LHLIFTATLITGLFQFAMGFL) form a helical membrane-spanning segment. The Cytoplasmic portion of the chain corresponds to 180–195 (RLGILVDFLSHSTITG). Residues 196-216 (FMGGTAIIILLQQLKGIFGLV) form a helical membrane-spanning segment. Residues 217–239 (HFTHKTDVVSVLHSILDNRAEWK) are Extracellular-facing. A helical membrane pass occupies residues 240 to 260 (WQSTLAGVCFLVFLQSTRYIK). At 261-265 (QRYPK) the chain is on the cytoplasmic side. The chain crosses the membrane as a helical span at residues 266–286 (LFWVSAMGPMVVVVVGCVVAY). Over 287-321 (LVKGTAHGIATVGPLKKGLNPPSIQLLNFDSKYLG) the chain is Extracellular. Residues 322-342 (MVFKAGIVTGLIALAEGIAIG) form a helical membrane-spanning segment. Residues 343-358 (RSFAVMKNEQTDGNKE) are Cytoplasmic-facing. A helical transmembrane segment spans residues 359–379 (MIAFGLMNVIGSFTSCYLTTG). At 380-395 (PFSKTAVNYNAGTKTP) the chain is on the extracellular side. A helical transmembrane segment spans residues 396–416 (MSNVVMGVCMMLVLLFLAPLF). The Cytoplasmic segment spans residues 417 to 420 (SYTP). A helical membrane pass occupies residues 421-441 (LVGLSAIIMSAMLGLINYEEM). At 442–458 (YHLFKVDKFDFLVCMSA) the chain is on the extracellular side. The helical transmembrane segment at 459-479 (FFGVSFLSMDYGLIISVGFSI) threads the bilayer. Residues 480–634 (VRALLYVARP…FNLTTTKPEV (155 aa)) lie on the Cytoplasmic side of the membrane. Residues 508 to 623 (QYPASEEMLG…LSIDDAVQAC (116 aa)) form the STAS domain.

The protein belongs to the SLC26A/SulP transporter (TC 2.A.53) family.

It localises to the membrane. Its function is as follows. H(+)/sulfate cotransporter that may play a role in the regulation of sulfate assimilation. This Arabidopsis thaliana (Mouse-ear cress) protein is Probable sulfate transporter 3.5 (SULTR3;5).